The following is a 159-amino-acid chain: MTSLVYFSSVSENTHRFVQRLGLPATRIPIHDRDGSFRVDEPYVLILPTYGGGVTVTGRDTSYVPKPVIRFLNNPHNRSLIRAVIAAGNTNFGESFCYAGNIISQKCHVPFLYRFELMGTAEDVDRVREGLGEFWNHLETEKEHGQWRQPSLTRSRQEA.

The protein belongs to the NrdI family.

Functionally, probably involved in ribonucleotide reductase function. This Rhodococcus erythropolis (strain PR4 / NBRC 100887) protein is Protein NrdI.